Reading from the N-terminus, the 145-residue chain is D-aminoacyl-tRNA deacylase (145 aa).

Positions 137–138 (GP) match the Gly-cisPro motif, important for rejection of L-amino acids motif.

It belongs to the DTD family. Homodimer.

The protein localises to the cytoplasm. The enzyme catalyses glycyl-tRNA(Ala) + H2O = tRNA(Ala) + glycine + H(+). It carries out the reaction a D-aminoacyl-tRNA + H2O = a tRNA + a D-alpha-amino acid + H(+). In terms of biological role, an aminoacyl-tRNA editing enzyme that deacylates mischarged D-aminoacyl-tRNAs. Also deacylates mischarged glycyl-tRNA(Ala), protecting cells against glycine mischarging by AlaRS. Acts via tRNA-based rather than protein-based catalysis; rejects L-amino acids rather than detecting D-amino acids in the active site. By recycling D-aminoacyl-tRNA to D-amino acids and free tRNA molecules, this enzyme counteracts the toxicity associated with the formation of D-aminoacyl-tRNA entities in vivo and helps enforce protein L-homochirality. The sequence is that of D-aminoacyl-tRNA deacylase from Idiomarina loihiensis (strain ATCC BAA-735 / DSM 15497 / L2-TR).